We begin with the raw amino-acid sequence, 86 residues long: Acyl carrier protein (86 aa).

Residues 10–85 (DKIEQKVIEM…DVIKYIKERQ (76 aa)) form the Carrier domain. S45 is subject to O-(pantetheine 4'-phosphoryl)serine.

Belongs to the acyl carrier protein (ACP) family. In terms of processing, 4'-phosphopantetheine is transferred from CoA to a specific serine of apo-ACP by AcpS. This modification is essential for activity because fatty acids are bound in thioester linkage to the sulfhydryl of the prosthetic group.

It localises to the cytoplasm. The protein operates within lipid metabolism; fatty acid biosynthesis. In terms of biological role, carrier of the growing fatty acid chain in fatty acid biosynthesis. The sequence is that of Acyl carrier protein from Rickettsia africae (strain ESF-5).